A 142-amino-acid chain; its full sequence is RNA polymerase-binding transcription factor DksA (142 aa).

Disordered stretches follow at residues 1 to 20 (MQTA…EDEP), 51 to 70 (HLQK…SSET), and 119 to 142 (RPTA…HRDD). The dksA C4-type zinc finger occupies 104–128 (CEETGEPIGLARLEARPTATMSVEA). A compositionally biased stretch (basic and acidic residues) spans 128 to 142 (AQERHERRERVHRDD).

This sequence belongs to the DksA family. As to quaternary structure, interacts directly with the RNA polymerase.

Its subcellular location is the cytoplasm. Functionally, transcription factor that acts by binding directly to the RNA polymerase (RNAP). Required for negative regulation of rRNA expression and positive regulation of several amino acid biosynthesis promoters. This is RNA polymerase-binding transcription factor DksA from Caulobacter vibrioides (strain ATCC 19089 / CIP 103742 / CB 15) (Caulobacter crescentus).